A 589-amino-acid chain; its full sequence is Oligo-1,6-glucosidase IMA3 (589 aa).

The active-site Nucleophile is the D215. Residue E277 is the Proton donor of the active site.

It belongs to the glycosyl hydrolase 13 family.

It localises to the cytoplasm. The catalysed reaction is Hydrolysis of (1-&gt;6)-alpha-D-glucosidic linkages in some oligosaccharides produced from starch and glycogen by alpha-amylase, and in isomaltose.. Alpha-glucosidase with broad substrate specificity for alpha-1,4- and alpha-1,6-glucosides. Not required for isomaltose utilization, but overexpression allows the IMA1 null mutant to grow on isomaltose. This is Oligo-1,6-glucosidase IMA3 (IMA3) from Saccharomyces cerevisiae (strain ATCC 204508 / S288c) (Baker's yeast).